We begin with the raw amino-acid sequence, 425 residues long: Xyloglucan O-acetyltransferase 2 (425 aa).

Topologically, residues 1–18 are cytoplasmic; that stretch reads MGSPFKDHHTLHPSLVRK. The chain crosses the membrane as a helical; Signal-anchor for type II membrane protein span at residues 19–38; it reads LIPWTFYAMVPLVLFRVYLY. Residues 39–425 are Lumenal-facing; that stretch reads PYPLHHTTTT…KWEYASRREQ (387 aa). 4 cysteine pairs are disulfide-bonded: cysteine 68–cysteine 118, cysteine 89–cysteine 154, cysteine 98–cysteine 398, and cysteine 313–cysteine 394. Asparagine 85 carries an N-linked (GlcNAc...) asparagine glycan. The short motif at 141 to 143 is the GDS motif element; that stretch reads GDS. The Nucleophile role is filled by serine 143. N-linked (GlcNAc...) asparagine glycans are attached at residues asparagine 183 and asparagine 259. The Proton donor role is filled by aspartate 393. The DXXH motif signature appears at 393 to 396; that stretch reads DCVH. Residue histidine 396 is the Proton acceptor of the active site.

The protein belongs to the PC-esterase family. TBL subfamily.

The protein localises to the golgi apparatus membrane. Xyloglucan acetyltransferase that catalyzes the acetylation of fucosylated Gal residues on xyloglucan side chains. Predominantly catalyze 6-O-monoacetylation of Gal residues in the Fuc-Gal-Xyl trisaccharide side chains of xyloglucan oligomers. This chain is Xyloglucan O-acetyltransferase 2, found in Populus trichocarpa (Western balsam poplar).